The sequence spans 1013 residues: Sodium/potassium-transporting ATPase subunit alpha-3 (1013 aa).

Positions 1–10 (MGDKKDDKSS) are enriched in basic and acidic residues. Positions 1–24 (MGDKKDDKSSPKKSKAKERRDLDD) are disordered. Residues 1–77 (MGDKKDDKSS…NALTPPPTTP (77 aa)) are Cytoplasmic-facing. 2 positions are modified to phosphoserine: serine 37 and serine 56. The segment at 72–74 (PPP) is interaction with phosphoinositide-3 kinase. The chain crosses the membrane as a helical span at residues 78–98 (EWVKFCRQLFGGFSILLWIGA). At 99–121 (ILCFLAYGIQAGTEDDPSGDNLY) the chain is on the extracellular side. The helical transmembrane segment at 122–142 (LGIVLAAVVIITGCFSYYQEA) threads the bilayer. The Cytoplasmic segment spans residues 143-278 (KSSKIMESFK…VGKTPIAIEI (136 aa)). Phosphoserine occurs at positions 218 and 265. A helical membrane pass occupies residues 279 to 298 (EHFIQLITGVAVFLGVSFFI). Residues 299–310 (LSLILGYTWLEA) are Extracellular-facing. A helical membrane pass occupies residues 311-328 (VIFLIGIIVANVPEGLLA). The Cytoplasmic segment spans residues 329-762 (TVTVCLTLTA…EEGRLIFDNL (434 aa)). Residue aspartate 366 is the 4-aspartylphosphate intermediate of the active site. Serine 442 is modified (phosphoserine). Tyrosine 548 is modified (phosphotyrosine). Positions 707 and 711 each coordinate Mg(2+). A helical transmembrane segment spans residues 763-782 (KKSIAYTLTSNIPEITPFLL). The Extracellular segment spans residues 783–792 (FIMANIPLPL). The helical transmembrane segment at 793-813 (GTITILCIDLGTDMVPAISLA) threads the bilayer. Residues 814 to 833 (YEAAESDIMKRQPRNPRTDK) lie on the Cytoplasmic side of the membrane. Residues 834–856 (LVNERLISMAYGQIGMIQALGGF) traverse the membrane as a helical segment. Residues 857–908 (FSYFVILAENGFLPGNLVGIRLNWDDRTVNDLEDSYGQQWTYEQRKVVEFTC) are Extracellular-facing. The chain crosses the membrane as a helical span at residues 909–928 (HTAFFVSIVVVQWADLIICK). Over 929–941 (TRRNSVFQQGMKN) the chain is Cytoplasmic. Serine 933 is subject to Phosphoserine; by PKA. The chain crosses the membrane as a helical span at residues 942 to 960 (KILIFGLFEETALAAFLSY). The Extracellular segment spans residues 961–975 (CPGMDVALRMYPLKP). Residues 976–996 (SWWFCAFPYSFLIFVYDEIRK) form a helical membrane-spanning segment. The Cytoplasmic segment spans residues 997–1013 (LILRRNPGGWVEKETYY).

The protein belongs to the cation transport ATPase (P-type) (TC 3.A.3) family. Type IIC subfamily. In terms of assembly, the sodium/potassium-transporting ATPase is composed of a catalytic alpha subunit, an auxiliary non-catalytic beta subunit and an additional regulatory subunit. Interacts with regulatory subunit FXYD1.

Its subcellular location is the cell membrane. The enzyme catalyses K(+)(out) + Na(+)(in) + ATP + H2O = K(+)(in) + Na(+)(out) + ADP + phosphate + H(+). Its function is as follows. This is the catalytic component of the active enzyme, which catalyzes the hydrolysis of ATP coupled with the exchange of sodium and potassium ions across the plasma membrane. This action creates the electrochemical gradient of sodium and potassium ions, providing the energy for active transport of various nutrients. The protein is Sodium/potassium-transporting ATPase subunit alpha-3 (Atp1a3) of Mus musculus (Mouse).